Here is a 414-residue protein sequence, read N- to C-terminus: ORC1-type DNA replication protein 1 (414 aa).

Residues 70 to 74, Tyr213, and Arg225 contribute to the ATP site; that span reads TGKTA.

The protein belongs to the CDC6/cdc18 family.

Involved in regulation of DNA replication. The sequence is that of ORC1-type DNA replication protein 1 (cdc6-1) from Methanosarcina acetivorans (strain ATCC 35395 / DSM 2834 / JCM 12185 / C2A).